The sequence spans 283 residues: Nucleotide-binding protein IL0393 (283 aa).

8 to 15 contacts ATP; sequence GRSGSGKT. 56–59 provides a ligand contact to GTP; sequence DVRN.

It belongs to the RapZ-like family.

In terms of biological role, displays ATPase and GTPase activities. This Idiomarina loihiensis (strain ATCC BAA-735 / DSM 15497 / L2-TR) protein is Nucleotide-binding protein IL0393.